Reading from the N-terminus, the 494-residue chain is Probable malate:quinone oxidoreductase (494 aa).

This sequence belongs to the MQO family. The cofactor is FAD.

The catalysed reaction is (S)-malate + a quinone = a quinol + oxaloacetate. It participates in carbohydrate metabolism; tricarboxylic acid cycle; oxaloacetate from (S)-malate (quinone route): step 1/1. In Micrococcus luteus (strain ATCC 4698 / DSM 20030 / JCM 1464 / CCM 169 / CCUG 5858 / IAM 1056 / NBRC 3333 / NCIMB 9278 / NCTC 2665 / VKM Ac-2230) (Micrococcus lysodeikticus), this protein is Probable malate:quinone oxidoreductase.